The primary structure comprises 457 residues: Multidrug resistance protein MdtK (457 aa).

12 helical membrane passes run 11 to 31 (LLAL…MGFV), 53 to 73 (IWLP…PVVA), 93 to 113 (WLAG…GYII), 127 to 147 (AVGY…FQVA), 160 to 180 (GMVM…IFIY), 191 to 211 (VGCG…MLWW), 243 to 263 (LPIA…ALLV), 276 to 296 (IALN…AAVT), 316 to 336 (RTGV…TVLM), 357 to 377 (LMLL…GSGI), 387 to 407 (IFFI…YLLA), and 418 to 438 (PAGF…MMML).

It belongs to the multi antimicrobial extrusion (MATE) (TC 2.A.66.1) family. MdtK subfamily.

The protein localises to the cell inner membrane. Multidrug efflux pump that functions probably as a Na(+)/drug antiporter. The chain is Multidrug resistance protein MdtK from Klebsiella pneumoniae subsp. pneumoniae (strain ATCC 700721 / MGH 78578).